Reading from the N-terminus, the 1288-residue chain is Disease resistance protein RRS1 (1288 aa).

A TIR domain is found at 5–146 (EKDEEFVCIS…EIVRDVYETH (142 aa)). The important for interaction with RPS4 stretch occupies residues 25-26 (SH). The region spanning 170–421 (IGIRCVGIWG…LLEGCGFFPH (252 aa)) is the NB-ARC domain. 179–186 (GMPGIGKT) is an ATP binding site. 12 LRR repeats span residues 498 to 522 (SEEI…AFKN), 535 to 553 (NPEV…HSLP), 554 to 575 (NELR…NFDP), 577 to 598 (HLVE…TKNL), 621 to 646 (AENL…RLLR), 665 to 688 (PPNI…TVKP), 697 to 720 (LTEI…NSSC), 740 to 764 (LPNM…SIQG), 766 to 791 (PRFL…SLEI), 792 to 807 (LNAH…NMAN), 808 to 829 (LEFL…QGFP), and 830 to 852 (RNLK…PLSL). The Nuclear localization signal signature appears at 986–1003 (RKFHCWAPWQVVPKVRKD). A DNA-binding region (WRKY) is located at residues 1202 to 1270 (IPAIDEGDLW…YLSEHNHPRP (69 aa)). Positions 1267 to 1288 (HPRPTKRKALADSTRSTSSSIC) are disordered. Residues 1279-1288 (STRSTSSSIC) show a composition bias toward polar residues.

It belongs to the disease resistance TIR-NB-LRR family. As to quaternary structure, interacts with PopP2, a R.solanacearum type III effector. Interacts with RPS4.

It is found in the nucleus. The protein localises to the cytoplasm. Functionally, transcription factor. Interacts specifically with the W box (5'-(T)TGAC[CT]-3'), a frequently occurring elicitor-responsive cis-acting element. Also acts as a disease resistance protein involved in resistance to fungal and bacterial pathogens, including R.solanacearum, P.syringae pv. tomato and C.higginsianum. Heterodimerization with RPS4 is required to form a functional complex to recognize AvrRps4 and PopP2. Contributes to temperature-conditioned RPS4 auto-immunity. The chain is Disease resistance protein RRS1 from Arabidopsis thaliana (Mouse-ear cress).